A 2082-amino-acid chain; its full sequence is Autophagy-related protein 2 (2082 aa).

Disordered regions lie at residues 108 to 130 (SADQ…LPNP), 144 to 175 (EEKE…EEFG), 285 to 343 (TAPP…VPEA), 365 to 435 (TEET…STFN), 462 to 527 (TGSF…RDGD), 580 to 636 (RSQC…SFES), 662 to 702 (SRDG…RSQD), 912 to 943 (SGVK…RQPS), 1435 to 1454 (DAAS…QPAN), and 2062 to 2082 (GAGN…YKRH). Residues 111 to 126 (QDTHRSPTDDTGDDHV) are compositionally biased toward basic and acidic residues. Composition is skewed to polar residues over residues 152-162 (AISSQSQVLQH) and 311-329 (PELN…QSTI). 2 stretches are compositionally biased toward basic and acidic residues: residues 397–430 (IDSH…RLHD) and 489–500 (QHAEEPQHEVRA). Low complexity predominate over residues 503 to 522 (SGSQPAPPSEEGSSSSTSNS). 3 stretches are compositionally biased toward basic and acidic residues: residues 588-597 (NRTRDEKDET), 622-633 (RTAHSEATDKGS), and 690-702 (HSER…RSQD). A compositionally biased stretch (basic and acidic residues) spans 2070–2082 (SNRRKMEDKYKRH).

Belongs to the ATG2 family.

The protein resides in the preautophagosomal structure membrane. The protein localises to the endoplasmic reticulum membrane. The catalysed reaction is a 1,2-diacyl-sn-glycero-3-phosphocholine(in) = a 1,2-diacyl-sn-glycero-3-phosphocholine(out). It catalyses the reaction a 1,2-diacyl-sn-glycero-3-phospho-L-serine(in) = a 1,2-diacyl-sn-glycero-3-phospho-L-serine(out). It carries out the reaction a 1,2-diacyl-sn-glycero-3-phosphoethanolamine(in) = a 1,2-diacyl-sn-glycero-3-phosphoethanolamine(out). Functionally, lipid transfer protein required for autophagosome completion and peroxisome degradation. Tethers the edge of the isolation membrane (IM) to the endoplasmic reticulum (ER) and mediates direct lipid transfer from ER to IM for IM expansion. Atg2 binds to the ER exit site (ERES), which is the membrane source for autophagosome formation, using basic residues in its N-terminal region (NR) and to the expanding edge of the IM through its C-terminal region. The latter binding is assisted by an atg18-PtdIns3P interaction. Atg2 then extracts phospholipids from the membrane source using its NR and transfers them to atg9 to the IM through its predicted beta-sheet-rich structure for membrane expansion. The polypeptide is Autophagy-related protein 2 (atg2) (Aspergillus terreus (strain NIH 2624 / FGSC A1156)).